We begin with the raw amino-acid sequence, 1229 residues long: Chitin synthase 4 (1229 aa).

Positions 1–196 (MSLPERPGAK…IVKEGKRKEK (196 aa)) are disordered. At 1 to 202 (MSLPERPGAK…RKEKIPEQLR (202 aa)) the chain is on the cytoplasmic side. Residues 18 to 27 (SYRKSPSRRN) are compositionally biased toward basic residues. The segment covering 43 to 66 (GQHQRGPSVNSFAETIRSPNSNIE) has biased composition (polar residues). Residues 92–105 (IRPERNRIDRDHPN) show a composition bias toward basic and acidic residues. The segment covering 137-150 (SGPPSGSNSASGSG) has biased composition (low complexity). Composition is skewed to basic and acidic residues over residues 164 to 177 (SGRETVAEKSDNTR) and 187 to 196 (IVKEGKRKEK). The chain crosses the membrane as a helical span at residues 203 to 223 (PPSAWNVYCAVITFWSPDFIM). Residues 224 to 240 (KCCGMPAKAQRRAWREK) lie on the Extracellular side of the membrane. A helical membrane pass occupies residues 241–261 (IGLISLILIIMGVVGFLTFGF). Over 262–495 (NQAVCGGPVL…IKVGTVDTDT (234 aa)) the chain is Cytoplasmic. A helical membrane pass occupies residues 496 to 516 (VGCIAAKVVLYVSLALILSVV). Topologically, residues 517 to 1054 (GARFTLALIF…LCGTFCFSMQ (538 aa)) are extracellular. Disordered regions lie at residues 539–589 (TSQT…RSSF) and 601–648 (GAER…DPYA). The segment covering 568-581 (GDVGSSVAGASSSD) has biased composition (low complexity). N-linked (GlcNAc...) asparagine glycosylation is found at Asn608, Asn635, and Asn1030. A compositionally biased stretch (polar residues) spans 608–648 (NKSMPTTMASQASGGYMGPSSTAYRETNESRTSFLKSDPYA). A helical transmembrane segment spans residues 1055–1075 (FVIFIELIGTLVLPAAIAFTF). Residues 1076–1088 (YVVIISIINQPPQ) lie on the Cytoplasmic side of the membrane. The helical transmembrane segment at 1089–1109 (IIPLVLLGLILGLPAILIIIT) threads the bilayer. Residues 1110 to 1114 (AHSWS) are Extracellular-facing. The chain crosses the membrane as a helical span at residues 1115 to 1135 (YVLWMLIYLLSLPVWNFVLPA). The Cytoplasmic segment spans residues 1136 to 1229 (YAFWKFDDFS…QQYDEYYSDA (94 aa)). Residues 1210–1229 (WASAPPHHHQQQYDEYYSDA) form a disordered region.

The protein belongs to the chitin synthase family. Class IV subfamily.

It is found in the cell membrane. It catalyses the reaction [(1-&gt;4)-N-acetyl-beta-D-glucosaminyl](n) + UDP-N-acetyl-alpha-D-glucosamine = [(1-&gt;4)-N-acetyl-beta-D-glucosaminyl](n+1) + UDP + H(+). Functionally, polymerizes chitin, a structural polymer of the cell wall and septum, by transferring the sugar moiety of UDP-GlcNAc to the non-reducing end of the growing chitin polymer. Might function as a negative regulator on expression of other CHS genes. This is Chitin synthase 4 from Pyricularia oryzae (strain 70-15 / ATCC MYA-4617 / FGSC 8958) (Rice blast fungus).